Here is a 229-residue protein sequence, read N- to C-terminus: Ribonuclease 3 (229 aa).

An RNase III domain is found at 5 to 127 (LDRLERKLGY…LIGAIYLDTG (123 aa)). Glu40 serves as a coordination point for Mg(2+). The active site involves Asp44. Residues Asp113 and Glu116 each coordinate Mg(2+). Residue Glu116 is part of the active site. One can recognise a DRBM domain in the interval 154–224 (DPKTRLQEFL…AAAALVALGV (71 aa)).

This sequence belongs to the ribonuclease III family. In terms of assembly, homodimer. Requires Mg(2+) as cofactor.

It is found in the cytoplasm. It carries out the reaction Endonucleolytic cleavage to 5'-phosphomonoester.. In terms of biological role, digests double-stranded RNA. Involved in the processing of primary rRNA transcript to yield the immediate precursors to the large and small rRNAs (23S and 16S). Processes some mRNAs, and tRNAs when they are encoded in the rRNA operon. Processes pre-crRNA and tracrRNA of type II CRISPR loci if present in the organism. This is Ribonuclease 3 from Pseudomonas aeruginosa (strain LESB58).